A 38-amino-acid chain; its full sequence is Exendin-1 (38 aa).

O-linked (HexNAc...) serine; in Exendin-1 and Exendin-1b glycosylation occurs at S32.

It belongs to the glucagon family. Post-translationally, O-linked glycan consists of Hex-HexNAc saccharide. In terms of processing, glycosylation may be of interest for the biological stability of exendin-1 and exendin-1b. In terms of tissue distribution, expressed by the venom gland.

The protein resides in the secreted. O-linked and free exendin-1 and exendin-1b have vasoactive intestinal peptide(VIP)/secretin-like biological activities. They interact with rat and human VIP receptors 1 (VIPR1) and 2 (VIPR2), with the highest affinity for the human VIPR2. They induce hypotension that is mediated by relaxation of cardiac smooth muscle. The sequence is that of Exendin-1 from Heloderma horridum horridum (Mexican beaded lizard).